A 94-amino-acid polypeptide reads, in one-letter code: Lipolysis-activating peptide 1-beta chain (94 aa).

The first 19 residues, 1 to 19, serve as a signal peptide directing secretion; sequence MKILAVVLISVIVLNTANG. The 68-residue stretch at 20 to 87 folds into the LCN-type CS-alpha/beta domain; it reads ENYYPQKYTN…FFNALESQCP (68 aa). 3 disulfides stabilise this stretch: Cys-34/Cys-56, Cys-42/Cys-66, and Cys-46/Cys-68.

The protein belongs to the long (3 C-C) scorpion toxin superfamily. As to quaternary structure, homodimer; disulfide-linked or monomer (edited version) or heterodimer of an alpha chain (AC D9U299 or AC D9U2A4) and this beta chain (non-edited version). In terms of tissue distribution, expressed by the venom gland.

It localises to the secreted. The homodimer inhibits HMG-CoA reductase (HMGCR) (32% of inhibition produced by 0.6 uM), a glycoprotein involved in the control of cholesterol biosynthesis. The inhibitory effects of bumarsin are seen at much lower concentrations (0.6 uM) than that for statins such as atorvastatin (5 mM) and simvastatin (10 uM). In addition to inhibition of HMG-CoA reductase, this protein lowers cholesterol levels by inducing steroid hormone synthesis via StAR, and by increasing reverse cholesterol transport mediated by the induction of ABCA1 and APOA1. In terms of biological role, the heterodimer non-edited LVP1 induces lipolysis in rat adipocytes. Induction of lipolysis by LVP1 appears to be mediated through the beta-2 adrenergic receptor pathway (ADRB2). Functionally, the monomer edited version, similar to alpha-toxins, may modulate voltage-gated sodium channels (Nav) and may block voltage-gated potassium channels (Kv). The chain is Lipolysis-activating peptide 1-beta chain from Lychas mucronatus (Chinese swimming scorpion).